The chain runs to 334 residues: Beta-hexosaminidase (334 aa).

Residues D57, R65, R128, and 158–159 (KH) contribute to the substrate site. H171 (proton donor/acceptor) is an active-site residue. The active-site Nucleophile is D242.

The protein belongs to the glycosyl hydrolase 3 family. NagZ subfamily.

It localises to the cytoplasm. It carries out the reaction Hydrolysis of terminal non-reducing N-acetyl-D-hexosamine residues in N-acetyl-beta-D-hexosaminides.. The protein operates within cell wall biogenesis; peptidoglycan recycling. In terms of biological role, plays a role in peptidoglycan recycling by cleaving the terminal beta-1,4-linked N-acetylglucosamine (GlcNAc) from peptide-linked peptidoglycan fragments, giving rise to free GlcNAc, anhydro-N-acetylmuramic acid and anhydro-N-acetylmuramic acid-linked peptides. This chain is Beta-hexosaminidase, found in Methylococcus capsulatus (strain ATCC 33009 / NCIMB 11132 / Bath).